The following is a 980-amino-acid chain: MTTLASSYDPSSFESRLYAQWEAAGYFVPSGKGEPYTVLLPPPNVTGTLHMGHAFQQTLMDALVRYHRMRGYDTLWQVGTDHAGIATEMVVSRNLALEGKGQTRDSLGREGFIAKVWEWKAESGDTIERQMRRLGTSSDWSRSTFTMDPQPSAAVNEAFVRWYEQGLIYRGQRLVNWDPVLKTAISDLEVENVEEDGFLWSIRYPLADGVSYEHVEHDADGNETLRETRDYLVVATTRPETMLGDTAVMVHPEDARYLTLHDARIVLPLTGRHVPVITDDYVDRAFGTGVVKVTPAHDFNDYQVGERHNLPLVNLFTVDAKIIDPREQYPDDEYPVVDQGIDWRELNQVQRRRTGQHFAYSIPSAYVGLDRYEARKLVLAHLEDEGRLVETKPHKLQVPRGDRTGQVIEPYLTDQWFVKMDALAKRGLELVESGQIKFVPPNWINTYRHWMENIQDWCISRQLWWGHRIPAWFDEAGTCYVGHDEAEVRAKHGLGADVALHQDSDVLETWFSSQLWPFSTLGWPDAQAMAERGFARYLPSSVLVTGFDIIFFWVARMIMATDSFTGQVPFRDVYITGLIRDAQGQKMSKSKGNVLDPLDIIDGISIEDLVAKRTHGLMQPRMAEKIEKATRKEFPDGIIVHGADALRFTIAALATHGRDIKFDLGRAEGYKNFCNKLWNATRFVLMNTEGARFTGVPQPRTEAEKWILARLDKATAETHAHYANYRFDLLAQSLYEFAWNAFCDWFVELAKPALNNQDADAAASTRHTLLYVLESLLRLLHPLTPFVTEELWQQVAPRLGITTATISLQSFPQPGDVDTSSYATAEADVEWLKSMVSALRRVRSELNVPPSKQVRLLLQADTADDRPRVARLASQLSFLLKLERIDWLDAGQDTPPSAAAIVGELTLLVPLEGLVDMDAERTRLDKEIKRVEGEIAKCNGKLGSATFVQNAPAAVVEQERARLNDWTTQLTGLREQRAKI.

The short motif at 43 to 53 is the 'HIGH' region element; the sequence is PNVTGTLHMGH. A 'KMSKS' region motif is present at residues 586-590; the sequence is KMSKS. Lys589 provides a ligand contact to ATP. Residues 914–978 are a coiled coil; sequence LVDMDAERTR…QLTGLREQRA (65 aa).

This sequence belongs to the class-I aminoacyl-tRNA synthetase family. ValS type 1 subfamily. As to quaternary structure, monomer.

The protein localises to the cytoplasm. It carries out the reaction tRNA(Val) + L-valine + ATP = L-valyl-tRNA(Val) + AMP + diphosphate. Its function is as follows. Catalyzes the attachment of valine to tRNA(Val). As ValRS can inadvertently accommodate and process structurally similar amino acids such as threonine, to avoid such errors, it has a 'posttransfer' editing activity that hydrolyzes mischarged Thr-tRNA(Val) in a tRNA-dependent manner. The chain is Valine--tRNA ligase from Xanthomonas euvesicatoria pv. vesicatoria (strain 85-10) (Xanthomonas campestris pv. vesicatoria).